The primary structure comprises 434 residues: Alpha-enolase (434 aa).

Residue serine 40 coordinates Mg(2+). Substrate contacts are provided by histidine 158 and glutamate 167. The Proton donor role is filled by glutamate 210. Mg(2+)-binding residues include aspartate 245, glutamate 293, and aspartate 318. 2 residues coordinate substrate: glutamate 293 and aspartate 318. The Proton acceptor role is filled by lysine 343. Residues 370 to 373 (SHRS) and lysine 394 contribute to the substrate site.

This sequence belongs to the enolase family. As to quaternary structure, homodimer. Requires Mg(2+) as cofactor.

It is found in the cytoplasm. It carries out the reaction (2R)-2-phosphoglycerate = phosphoenolpyruvate + H2O. It functions in the pathway carbohydrate degradation; glycolysis; pyruvate from D-glyceraldehyde 3-phosphate: step 4/5. The chain is Alpha-enolase from Alligator mississippiensis (American alligator).